An 886-amino-acid polypeptide reads, in one-letter code: Linoleate 9S-lipoxygenase 5 (886 aa).

The PLAT domain occupies 35–180; it reads IEGEVVVMKK…RYRSDRVFFS (146 aa). The Lipoxygenase domain maps to 183–886; sequence AYLPSETPEL…GKGIPNSVSI (704 aa). The disordered stretch occupies residues 234 to 266; that stretch reads GPDSVRPVLGGSPELPYPRRGKTGRKSTKSDPK. The Fe cation site is built by His542, His547, His733, Asn737, and Ile886.

It belongs to the lipoxygenase family. The cofactor is Fe cation. In terms of tissue distribution, expressed in roots.

The catalysed reaction is (9Z,12Z)-octadecadienoate + O2 = (9S)-hydroperoxy-(10E,12Z)-octadecadienoate. The enzyme catalyses (9Z,12Z,15Z)-octadecatrienoate + O2 = (9S)-hydroperoxy-(10E,12Z,15Z)-octadecatrienoate. It functions in the pathway lipid metabolism; oxylipin biosynthesis. In terms of biological role, 9S-lipoxygenase that can use linoleic acid or linolenic acid as substrates. Plant lipoxygenases may be involved in a number of diverse aspects of plant physiology including growth and development, pest resistance, and senescence or responses to wounding. Catalyzes the hydroperoxidation of lipids containing a cis,cis-1,4-pentadiene structure. Function as regulators of root development by controlling the emergence of lateral roots. 9S-lypoxygenase-derived oxylipins may play an antagonistic role to ethylene signaling in the control of responses involving oxidative stress, lipid peroxidation and plant defense. LOX5-derived oxylipins may facilitate performance of green peach aphid (Myzus persicae) on foliage. 9S-lypoxygenase-derived oxylipins are engaged during infection to control the balance between salicylic acid (SA) and jasmonate (JA) signaling to facilitate infection by the fungal pathogen Fusarium graminearum. 9S-lypoxygenase-derived oxylipins activate brassinosteroid signaling to promote cell wall-based defense and limit pathogen infection. Does not seem to contribute to the oxidation of free fatty acids during seed aging. The sequence is that of Linoleate 9S-lipoxygenase 5 from Arabidopsis thaliana (Mouse-ear cress).